Reading from the N-terminus, the 92-residue chain is Small ribosomal subunit protein uS19c (92 aa).

Belongs to the universal ribosomal protein uS19 family.

Its subcellular location is the plastid. The protein resides in the chloroplast. Protein S19 forms a complex with S13 that binds strongly to the 16S ribosomal RNA. The polypeptide is Small ribosomal subunit protein uS19c (rps19) (Picea abies (Norway spruce)).